Here is a 464-residue protein sequence, read N- to C-terminus: Protein FAM90A9 (464 aa).

3 disordered regions span residues 1–42 (MMAR…DPRL), 70–389 (PATL…HDGA), and 411–437 (APSF…SEAP). Basic and acidic residues-rich tracts occupy residues 74-89 (GKKE…KPRV) and 97-114 (NKDK…DPQR). A compositionally biased stretch (low complexity) spans 180–197 (LASLSPLRKASLSSSSSL).

It belongs to the FAM90 family.

The polypeptide is Protein FAM90A9 (FAM90A9) (Homo sapiens (Human)).